Reading from the N-terminus, the 84-residue chain is U8-theraphotoxin-Hhn1a (84 aa).

The N-terminal stretch at 1–21 is a signal peptide; the sequence is MKVVLLECLVWMMAMMELVSC. Intrachain disulfides connect cysteine 23–cysteine 35, cysteine 29–cysteine 44, cysteine 34–cysteine 67, cysteine 54–cysteine 75, and cysteine 69–cysteine 81.

This sequence belongs to the AVIT (prokineticin) family. As to expression, expressed by the venom gland.

It is found in the secreted. The protein is U8-theraphotoxin-Hhn1a of Cyriopagopus hainanus (Chinese bird spider).